The chain runs to 558 residues: Formate--tetrahydrofolate ligase (558 aa).

66 to 73 (TPAGEGKT) provides a ligand contact to ATP.

The protein belongs to the formate--tetrahydrofolate ligase family.

The enzyme catalyses (6S)-5,6,7,8-tetrahydrofolate + formate + ATP = (6R)-10-formyltetrahydrofolate + ADP + phosphate. It functions in the pathway one-carbon metabolism; tetrahydrofolate interconversion. The protein is Formate--tetrahydrofolate ligase of Clostridium kluyveri (strain NBRC 12016).